We begin with the raw amino-acid sequence, 835 residues long: Protein translocase subunit SecA (835 aa).

Residues Gln-85, 103–107, and Asp-495 contribute to the ATP site; that span reads GEGKT. The tract at residues 806–835 is disordered; sequence KVFLNNDSSDDESSKKRRTRKVRTSKKPWN. Positions 820 to 835 are enriched in basic residues; that stretch reads KKRRTRKVRTSKKPWN.

Belongs to the SecA family. As to quaternary structure, monomer and homodimer. Part of the essential Sec protein translocation apparatus which comprises SecA, SecYEG and auxiliary proteins SecDF. Other proteins may also be involved.

The protein resides in the cell membrane. Its subcellular location is the cytoplasm. It catalyses the reaction ATP + H2O + cellular proteinSide 1 = ADP + phosphate + cellular proteinSide 2.. Its function is as follows. Part of the Sec protein translocase complex. Interacts with the SecYEG preprotein conducting channel. Has a central role in coupling the hydrolysis of ATP to the transfer of proteins into and across the cell membrane, serving as an ATP-driven molecular motor driving the stepwise translocation of polypeptide chains across the membrane. In Onion yellows phytoplasma (strain OY-M), this protein is Protein translocase subunit SecA.